The chain runs to 475 residues: MKHKVKHVHFVGIGGSGMSGIAEVLLNLGFSVSGSDLADNATTRRLAGFGAKLYQGHAAEHLGESDVVVISSAVKDDNPEVVAARERNIPIIPRALMLAELMRFRQGIAIAGTHGKTTTTSLIASILAEAGMDPTFVIGGRLEASGSNARLGTGEYIVAEADESDASFLHLTPIISVVTNIDADHMDTYGHDFERLKGAFVEFLQRLPFYGMAVVCIDDPNVRAILPQISKQVMPYGFSEEARIRASNVQAENGRMHFTVTRINGVTTTFDVTLNLPGRHYVLNALAAIAVASELNVPDGAIIKALAEFKGVGRRFERYGEVPARDGGYFTLVDDYGHHPAEMNAVIAAARDAFPGRRLVLAFQPHRYTRTRDCFEDFVKVLSSADVVLLTEVYAAGEAPIVAADGRSLVRAIRVAGKVEPLFVETPQELPQSILDMAQDGDVVIVMGAGSIGQVAARTKEMAEVAEHVPMEAVR.

Residue 112-118 (GTHGKTT) participates in ATP binding.

Belongs to the MurCDEF family.

The protein resides in the cytoplasm. It catalyses the reaction UDP-N-acetyl-alpha-D-muramate + L-alanine + ATP = UDP-N-acetyl-alpha-D-muramoyl-L-alanine + ADP + phosphate + H(+). The protein operates within cell wall biogenesis; peptidoglycan biosynthesis. Cell wall formation. The protein is UDP-N-acetylmuramate--L-alanine ligase of Methylobacillus flagellatus (strain ATCC 51484 / DSM 6875 / VKM B-1610 / KT).